The chain runs to 51 residues: Large ribosomal subunit protein eL39 (51 aa).

It belongs to the eukaryotic ribosomal protein eL39 family.

Its function is as follows. Binds specifically to a region in 26S rRNA near the subunit interface. The polypeptide is Large ribosomal subunit protein eL39 (rpl39e) (Sulfolobus acidocaldarius (strain ATCC 33909 / DSM 639 / JCM 8929 / NBRC 15157 / NCIMB 11770)).